We begin with the raw amino-acid sequence, 229 residues long: Probable transmembrane reductase CYB561D1 (229 aa).

Over 1 to 24 (MHSMEVGLVPAPAREPRLTRWLRR) the chain is Cytoplasmic. The Cytochrome b561 domain maps to 22–224 (LRRGSGILAH…HQISSSYLPR (203 aa)). Residues 25–45 (GSGILAHLIALGFTIFLTVLS) traverse the membrane as a helical segment. The Lumenal segment spans residues 46-53 (RPGTSLFS). Residues 54 to 74 (WHPVFMALAFCLCMAEAILLF) traverse the membrane as a helical segment. Histidine 55 serves as a coordination point for heme b. Over 75-91 (SPEHSLFFFCSRKTRIR) the chain is Cytoplasmic. Residues 92 to 112 (LHWAGQTMAILCAVLGLGFII) traverse the membrane as a helical segment. Heme b contacts are provided by histidine 93 and histidine 127. Over 113 to 128 (SSKIRSEMSHLVSWHS) the chain is Lumenal. A helical transmembrane segment spans residues 129–149 (WIGALTLLATGGQALCGLCLL). Over 150 to 169 (CPRAARVSRVARLKLYHLTC) the chain is Cytoplasmic. Histidine 166 contributes to the heme b binding site. Residues 170–190 (GLVVYLMATVTVLLGMYSVWF) form a helical membrane-spanning segment. Residues 191–193 (QAQ) are Lumenal-facing. Residues 194 to 214 (IKGTAWYLCLGLPLYPALVIM) traverse the membrane as a helical segment. At 215-229 (HQISSSYLPRKKVEI) the chain is on the cytoplasmic side.

It depends on heme b as a cofactor.

The protein localises to the membrane. The catalysed reaction is monodehydro-L-ascorbate radical(out) + L-ascorbate(in) = monodehydro-L-ascorbate radical(in) + L-ascorbate(out). It catalyses the reaction Fe(3+)(out) + L-ascorbate(in) = monodehydro-L-ascorbate radical(in) + Fe(2+)(out) + H(+). In terms of biological role, probable transmembrane reductase that may use ascorbate as an electron donor and transfer electrons across membranes to reduce monodehydro-L-ascorbate radical and iron cations Fe(3+) in another cellular compartment. This chain is Probable transmembrane reductase CYB561D1, found in Mus musculus (Mouse).